The following is a 276-amino-acid chain: MIEIKNLKFKYNQDQTSYTLNDVSFHVKHGEWLSIVGHNGSGKSTTARLIGGLLVADSGQIIVDGQELTEETVWDIRDKIGMVFQNPDNQFVGATVEDDVAFGLENKGLPYKEMVSRVQEALSFVGMMDFKDREPARLSGGQKQRVAIAGIIAMRPSILILDEATSMLDPEGRQELIQYIEDIRQQYGMTVLSITHDLDEVAMSNRVLVLKQGKVESISSPRELFSRGSELVDLGLDIPFSALLTQKLKNQGLIDCEGYLTEKELVEQLWEYLSKM.

Residues 2 to 237 (IEIKNLKFKY…GSELVDLGLD (236 aa)) form the ABC transporter domain. 37–44 (GHNGSGKS) contributes to the ATP binding site.

It belongs to the ABC transporter superfamily. Energy-coupling factor EcfA family. As to quaternary structure, forms a stable energy-coupling factor (ECF) transporter complex composed of 2 membrane-embedded substrate-binding proteins (S component), 2 ATP-binding proteins (A component) and 2 transmembrane proteins (T component).

Its subcellular location is the cell membrane. Functionally, ATP-binding (A) component of a common energy-coupling factor (ECF) ABC-transporter complex. Unlike classic ABC transporters this ECF transporter provides the energy necessary to transport a number of different substrates. In Streptococcus thermophilus (strain CNRZ 1066), this protein is Energy-coupling factor transporter ATP-binding protein EcfA1.